The following is a 133-amino-acid chain: ATP synthase epsilon chain (133 aa).

It belongs to the ATPase epsilon chain family. As to quaternary structure, F-type ATPases have 2 components, CF(1) - the catalytic core - and CF(0) - the membrane proton channel. CF(1) has five subunits: alpha(3), beta(3), gamma(1), delta(1), epsilon(1). CF(0) has three main subunits: a, b and c.

It is found in the cell inner membrane. In terms of biological role, produces ATP from ADP in the presence of a proton gradient across the membrane. This chain is ATP synthase epsilon chain, found in Paramagnetospirillum magneticum (strain ATCC 700264 / AMB-1) (Magnetospirillum magneticum).